A 111-amino-acid polypeptide reads, in one-letter code: Flagellar hook-basal body complex protein FliE (111 aa).

The protein belongs to the FliE family.

The protein localises to the bacterial flagellum basal body. In Sinorhizobium fredii (strain NBRC 101917 / NGR234), this protein is Flagellar hook-basal body complex protein FliE.